We begin with the raw amino-acid sequence, 940 residues long: Phosphoenolpyruvate carboxylase (940 aa).

Residues histidine 138 and lysine 603 contribute to the active site.

This sequence belongs to the PEPCase type 1 family. Mg(2+) is required as a cofactor.

It catalyses the reaction oxaloacetate + phosphate = phosphoenolpyruvate + hydrogencarbonate. Its function is as follows. Forms oxaloacetate, a four-carbon dicarboxylic acid source for the tricarboxylic acid cycle. The polypeptide is Phosphoenolpyruvate carboxylase (Streptococcus thermophilus (strain CNRZ 1066)).